Reading from the N-terminus, the 836-residue chain is MRIWEKIFGTYSQRELKRVIPIVDKIDKLDQTMQKLTDEELKNKTNEFKERLSKGETLDDILVEAFAVAREAAWRVVKLKPYREQLIGGIILHQGRIAEMKTGEGKTLVATLPAYLNALKGEGVHIVTVNDYLAKRDKETMGAIYEFLGLTVGVILHDLEHNERQEAYNCDITYGTNSELGFDYLRDNMVVYKEERVQRKLNFSIVDEVDSILIDEARTPLIISGQGEKSTEFYKVADYFAKSLIKEEDFTVDEKASAVMLTDKGIEKAEAYFKLENYADPENMEIQHHVVQALKANYSMKKDTDYMVRDGEVLIVDEFTGRVMDGRRYSDGLHQAIEAKEGVNVERESKTLATITYQNFFRMYDKLSGMTGTAQTEEVEFREIYGLDVVVIPTHKPVLRIDNSDVVYKSEKGKYMAIVDEIVETHKKGQPVLVGTVSIEKSELISEMLKRKGVPHQVLNAKYHEKEAEIVSHAGEYGMVTIATNMAGRGTDIKLEEEVIKAGGLKIIGTERHESRRIDNQLRGRSGRQGDPGASRFYVSLEDDLMRIFGSDKLKGIVEKLGLGDDEAIESKMVSNAIENAQKKVEGNNFDIRKTLIQYDDVINKQREIIYKQRSEVLEGADLKDQIQEMIRDVINSVVDSHISDIEEEFKEELDKLIKFLEDIFLPKDYIKVEHLENLSNDEIKEKLYDIAKNIYTDKEEEFESEQMRDIERVILLRVVDTKWMDHIDNMDHLKQGIGLRAYKQQDPVQAYQFEGSQMFDEMIYNIKVDTVRYLFRVQIEKAPEREQVAKETSTNQGGDDTLKKQPIKKEPKIGRNDLCPCGSGKKYKNCCGREV.

Residues Gln-85, Gly-103 to Thr-107, and Asp-492 each bind ATP. A disordered region spans residues Arg-786–Asn-817. A compositionally biased stretch (basic and acidic residues) spans Asp-801–Arg-816. Zn(2+) is bound by residues Cys-820, Cys-822, Cys-831, and Cys-832.

It belongs to the SecA family. In terms of assembly, monomer and homodimer. Part of the essential Sec protein translocation apparatus which comprises SecA, SecYEG and auxiliary proteins SecDF. Other proteins may also be involved. The cofactor is Zn(2+).

The protein localises to the cell membrane. It is found in the cytoplasm. The catalysed reaction is ATP + H2O + cellular proteinSide 1 = ADP + phosphate + cellular proteinSide 2.. Part of the Sec protein translocase complex. Interacts with the SecYEG preprotein conducting channel. Has a central role in coupling the hydrolysis of ATP to the transfer of proteins into and across the cell membrane, serving as an ATP-driven molecular motor driving the stepwise translocation of polypeptide chains across the membrane. This Clostridium tetani (strain Massachusetts / E88) protein is Protein translocase subunit SecA.